The following is a 362-amino-acid chain: Leucoanthocyanidin dioxygenase (362 aa).

The region spanning 211–313 is the Fe2OG dioxygenase domain; the sequence is MEELLLQKKI…RISWAVFCEP (103 aa). Fe cation-binding residues include His238, Asp240, and His294.

The protein belongs to the iron/ascorbate-dependent oxidoreductase family. The cofactor is Fe cation. L-ascorbate is required as a cofactor.

The catalysed reaction is a (2R,3S,4S)-leucoanthocyanidin + 2-oxoglutarate + O2 = a 4-H-anthocyanidin with a 3-hydroxy group + succinate + CO2 + 2 H2O. Its pathway is pigment biosynthesis; anthocyanin biosynthesis. Oxidation of leucoanthocyanidins into anthocyanidins. This Vitis vinifera (Grape) protein is Leucoanthocyanidin dioxygenase.